Reading from the N-terminus, the 263-residue chain is ATP synthase subunit a (263 aa).

Positions 1 to 14 are cleaved as a propeptide — removed in mature form; the sequence is MYLNNNNNMKYYIN. Helical transmembrane passes span 35–57, 95–117, 129–151, 156–178, 191–213, and 228–250; these read FSFI…ILTM, VWGY…NLIS, VVFV…FYTH, FGLF…IELL, LSAN…FNLM, and IAIL…VWCI.

Belongs to the ATPase A chain family. As to quaternary structure, F-type ATPases have 2 components, CF(1) - the catalytic core - and CF(0) - the membrane proton channel. In yeast, the dimeric form of ATP synthase consists of 18 polypeptides: alpha, beta, gamma, delta, epsilon, 4 (B), 5 (OSCP), 6 (A), 8, 9 (C), d, E (Tim11), f, g, h, i, j and k.

It is found in the mitochondrion inner membrane. Functionally, mitochondrial membrane ATP synthase (F(1)F(0) ATP synthase or Complex V) produces ATP from ADP in the presence of a proton gradient across the membrane which is generated by electron transport complexes of the respiratory chain. F-type ATPases consist of two structural domains, F(1) - containing the extramembraneous catalytic core and F(0) - containing the membrane proton channel, linked together by a central stalk and a peripheral stalk. During catalysis, ATP synthesis in the catalytic domain of F(1) is coupled via a rotary mechanism of the central stalk subunits to proton translocation. Key component of the proton channel; it may play a direct role in the translocation of protons across the membrane. The protein is ATP synthase subunit a (ATP6) of Eremothecium gossypii (strain ATCC 10895 / CBS 109.51 / FGSC 9923 / NRRL Y-1056) (Yeast).